Consider the following 641-residue polypeptide: XK-related protein 6 (641 aa).

Disordered regions lie at residues 20 to 47 (LDEA…DGSE) and 84 to 120 (RSAA…PPPP). Positions 34–46 (PGGGGCGGGGDGS) are enriched in gly residues. Residues 107–120 (PPTPSAARPEPPPP) are compositionally biased toward pro residues. Helical transmembrane passes span 130–150 (LWIV…LWLA), 159–179 (YVYF…VQSL), 318–338 (TLPC…LASY), 372–392 (VISF…FVVV), 413–433 (WEEI…WFNV), 442–462 (MFAY…LWYF), and 473–493 (AVPA…MMLL).

Belongs to the XK family.

The protein resides in the cell membrane. The chain is XK-related protein 6 from Homo sapiens (Human).